We begin with the raw amino-acid sequence, 928 residues long: Eukaryotic translation initiation factor 3 subunit C (928 aa).

Disordered regions lie at residues 1-37 (MSRF…SDDE) and 157-286 (FREA…EDGE). Over residues 11–20 (SESESSEEEV) the composition is skewed to acidic residues. Residues 22–33 (TQFNNKAQNFQF) show a composition bias toward polar residues. 4 positions are modified to phosphoserine: Ser34, Ser165, Ser177, and Ser186. Over residues 162 to 171 (DQESDVDEGE) the composition is skewed to acidic residues. Over residues 172–184 (GDVHDSDADRAGD) the composition is skewed to basic and acidic residues. Positions 215-240 (DDDDSEDSIDWDPDTESETESSEDEN) are enriched in acidic residues. The segment covering 245–264 (MRERFLKRTTEKEDKDDDKR) has biased composition (basic and acidic residues). A compositionally biased stretch (basic residues) spans 265-277 (KDKRKEQKHKVRK). Positions 656 to 832 (FHMHINLELL…ETVVMHRSEP (177 aa)) constitute a PCI domain. The segment at 864 to 928 (FFQRGNMGNR…QQQVHTIDEE (65 aa)) is disordered. Residues 898-909 (QRNRNQRGHHKQ) are compositionally biased toward basic residues. The span at 910–921 (NQQQNQQQQQQQ) shows a compositional bias: low complexity.

This sequence belongs to the eIF-3 subunit C family. Component of the eukaryotic translation initiation factor 3 (eIF-3) complex. The eIF-3 complex interacts with pix.

The protein localises to the cytoplasm. Functionally, component of the eukaryotic translation initiation factor 3 (eIF-3) complex, which is involved in protein synthesis of a specialized repertoire of mRNAs and, together with other initiation factors, stimulates binding of mRNA and methionyl-tRNAi to the 40S ribosome. The eIF-3 complex specifically targets and initiates translation of a subset of mRNAs involved in cell proliferation. This Drosophila grimshawi (Hawaiian fruit fly) protein is Eukaryotic translation initiation factor 3 subunit C.